Here is a 250-residue protein sequence, read N- to C-terminus: MSNDPTHQFQIFKIVPIEIGGIDFSFTNASLFMAASAAVAVGFLYFATSNRAIVPGRSQSVAEMSYEFIANMLKEGAGKQGMKFFPLVFSLFMFVLTANLLGMFPYFFTITSQIIVTFALAILVIGTVLVYGFYKHGFHFLNVFVPSGVPGILLPLVVSIEIISFLSRPISLSVRLFANMLAGHITLKVFAGFVASLGALGAVGVGGAVLPLIMTVALTGLEFLVAFLQAYVFAVLTCMYLNDAIHPGGH.

Helical transmembrane passes span 29 to 49, 84 to 104, 114 to 134, 143 to 163, 193 to 213, and 216 to 236; these read ASLF…FATS, FFPL…LGMF, IIVT…YGFY, VFVP…IEII, FVAS…LPLI, and VALT…FAVL.

It belongs to the ATPase A chain family. As to quaternary structure, F-type ATPases have 2 components, CF(1) - the catalytic core - and CF(0) - the membrane proton channel. CF(1) has five subunits: alpha(3), beta(3), gamma(1), delta(1), epsilon(1). CF(0) has three main subunits: a(1), b(2) and c(9-12). The alpha and beta chains form an alternating ring which encloses part of the gamma chain. CF(1) is attached to CF(0) by a central stalk formed by the gamma and epsilon chains, while a peripheral stalk is formed by the delta and b chains.

Its subcellular location is the cell inner membrane. Its function is as follows. Key component of the proton channel; it plays a direct role in the translocation of protons across the membrane. The chain is ATP synthase subunit a from Rhizobium leguminosarum bv. trifolii (strain WSM2304).